Reading from the N-terminus, the 325-residue chain is N-acetyl-gamma-glutamyl-phosphate reductase (325 aa).

Residue cysteine 135 is part of the active site.

The protein belongs to the NAGSA dehydrogenase family. Type 1 subfamily.

Its subcellular location is the cytoplasm. It carries out the reaction N-acetyl-L-glutamate 5-semialdehyde + phosphate + NADP(+) = N-acetyl-L-glutamyl 5-phosphate + NADPH + H(+). It participates in amino-acid biosynthesis; L-arginine biosynthesis; N(2)-acetyl-L-ornithine from L-glutamate: step 3/4. Its function is as follows. Catalyzes the NADPH-dependent reduction of N-acetyl-5-glutamyl phosphate to yield N-acetyl-L-glutamate 5-semialdehyde. This chain is N-acetyl-gamma-glutamyl-phosphate reductase, found in Flavobacterium johnsoniae (strain ATCC 17061 / DSM 2064 / JCM 8514 / BCRC 14874 / CCUG 350202 / NBRC 14942 / NCIMB 11054 / UW101) (Cytophaga johnsonae).